The following is a 420-amino-acid chain: Subtilisin-like protease 7 (420 aa).

Positions 1–20 (MGFITKAIPLALAAASVING) are cleaved as a signal peptide. A propeptide spanning residues 21-119 (AEIMETRAGV…IERDARVQIN (99 aa)) is cleaved from the precursor. Positions 36-118 (KYIVVMNDGM…YIERDARVQI (83 aa)) constitute an Inhibitor I9 domain. One can recognise a Peptidase S8 domain in the interval 129-413 (SWGLARVGSK…SFPLNIYEEQ (285 aa)). Active-site charge relay system residues include Asp161 and His192. N-linked (GlcNAc...) asparagine glycans are attached at residues Asn222 and Asn252. Catalysis depends on Ser346, which acts as the Charge relay system. Asn396 carries N-linked (GlcNAc...) asparagine glycosylation.

It belongs to the peptidase S8 family.

It is found in the secreted. In terms of biological role, secreted subtilisin-like serine protease with keratinolytic activity that contributes to pathogenicity. This is Subtilisin-like protease 7 (SUB7) from Arthroderma benhamiae (strain ATCC MYA-4681 / CBS 112371) (Trichophyton mentagrophytes).